A 209-amino-acid chain; its full sequence is Thymidine kinase (209 aa).

ATP contacts are provided by residues 16–23 and 90–93; these read GPMFAGKT and DEAQ. Glu91 serves as the catalytic Proton acceptor.

This sequence belongs to the thymidine kinase family. As to quaternary structure, homotetramer.

It is found in the cytoplasm. It catalyses the reaction thymidine + ATP = dTMP + ADP + H(+). The protein is Thymidine kinase of Onion yellows phytoplasma (strain OY-M).